The following is a 239-amino-acid chain: MAVVTLAEMMEAGAHFGHQTRRWNPKMSRYIYCARNGVHIIDLVQTAVCMNNAYKWTRSAARSGKRFLFVGTKKQASEVVALEAARCGAAYVNQRWLGGMLTNWTTMKARIDRLKDLERMESSGAIAMRPKKEGAVLRRELERLQKYLGGLKTMRRLPDVVVLVDQRRESNAVLEARKLDIPLVSMLDTNCDPDLCEVPIPCNDDAVRSVQLVLGRLADAINEGRHGNNEQRGGGDAEG.

Belongs to the universal ribosomal protein uS2 family.

The polypeptide is Small ribosomal subunit protein uS2 (Parasynechococcus marenigrum (strain WH8102)).